The primary structure comprises 893 residues: DNA mismatch repair protein MutS (893 aa).

Residue 631–638 (GPNMAGKS) participates in ATP binding. Residues 821 to 858 (AGRPRVAVRQPQGGRRGASTGQLGLFGMEPAQGGTGVT) are disordered.

This sequence belongs to the DNA mismatch repair MutS family.

Its function is as follows. This protein is involved in the repair of mismatches in DNA. It is possible that it carries out the mismatch recognition step. This protein has a weak ATPase activity. The polypeptide is DNA mismatch repair protein MutS (Myxococcus xanthus (strain DK1622)).